A 699-amino-acid chain; its full sequence is Polyribonucleotide nucleotidyltransferase (699 aa).

Residues aspartate 485 and aspartate 491 each contribute to the Mg(2+) site. In terms of domain architecture, KH spans 552 to 611 (PRITTIKINPEKIRDVIGKGGAVIRALTEETGTTIELEDDGTVKIASSNGEATKEAIRRI). One can recognise an S1 motif domain in the interval 621 to 689 (GRIYNGKVIR…RQGRVRLSIK (69 aa)).

The protein belongs to the polyribonucleotide nucleotidyltransferase family. Component of the RNA degradosome, which is a multiprotein complex involved in RNA processing and mRNA degradation. Requires Mg(2+) as cofactor.

The protein resides in the cytoplasm. It catalyses the reaction RNA(n+1) + phosphate = RNA(n) + a ribonucleoside 5'-diphosphate. Functionally, involved in mRNA degradation. Catalyzes the phosphorolysis of single-stranded polyribonucleotides processively in the 3'- to 5'-direction. This is Polyribonucleotide nucleotidyltransferase from Shewanella sp. (strain MR-4).